Here is a 504-residue protein sequence, read N- to C-terminus: Probable cytosol aminopeptidase (504 aa).

2 residues coordinate Mn(2+): Lys-272 and Asp-277. Lys-284 is a catalytic residue. The Mn(2+) site is built by Asp-295, Asp-354, and Glu-356. Arg-358 is a catalytic residue.

The protein belongs to the peptidase M17 family. It depends on Mn(2+) as a cofactor.

It is found in the cytoplasm. The enzyme catalyses Release of an N-terminal amino acid, Xaa-|-Yaa-, in which Xaa is preferably Leu, but may be other amino acids including Pro although not Arg or Lys, and Yaa may be Pro. Amino acid amides and methyl esters are also readily hydrolyzed, but rates on arylamides are exceedingly low.. It catalyses the reaction Release of an N-terminal amino acid, preferentially leucine, but not glutamic or aspartic acids.. In terms of biological role, presumably involved in the processing and regular turnover of intracellular proteins. Catalyzes the removal of unsubstituted N-terminal amino acids from various peptides. This Chlorobaculum tepidum (strain ATCC 49652 / DSM 12025 / NBRC 103806 / TLS) (Chlorobium tepidum) protein is Probable cytosol aminopeptidase.